Here is a 251-residue protein sequence, read N- to C-terminus: Ubiquitin-conjugating enzyme E2 22 (251 aa).

The region spanning 10-156 (NVIKQLAKEL…ARLYTGIHAK (147 aa)) is the UBC core domain. Cysteine 94 serves as the catalytic Glycyl thioester intermediate. Residues 230–240 (GLAKVQADKKK) show a composition bias toward basic and acidic residues. Residues 230–251 (GLAKVQADKKKVDARKKSLKRL) form a disordered region. Residues 230–251 (GLAKVQADKKKVDARKKSLKRL) are a coiled coil. Over residues 241-251 (VDARKKSLKRL) the composition is skewed to basic residues.

The protein belongs to the ubiquitin-conjugating enzyme family. Self-ubiquitinated. In terms of tissue distribution, expressed in seeds, pistils, siliques, hypocotyls and leaves.

It catalyses the reaction S-ubiquitinyl-[E1 ubiquitin-activating enzyme]-L-cysteine + [E2 ubiquitin-conjugating enzyme]-L-cysteine = [E1 ubiquitin-activating enzyme]-L-cysteine + S-ubiquitinyl-[E2 ubiquitin-conjugating enzyme]-L-cysteine.. Its pathway is protein modification; protein ubiquitination. Its function is as follows. Accepts the ubiquitin from the E1 complex and catalyzes its covalent attachment to other proteins. This Arabidopsis thaliana (Mouse-ear cress) protein is Ubiquitin-conjugating enzyme E2 22 (UBC22).